The chain runs to 371 residues: RNA polymerase sigma factor SigA (371 aa).

The sigma-70 factor domain-2 stretch occupies residues 137-207 (LAEANLRLVV…TRAIADQART (71 aa)). Positions 161–164 (DLIQ) match the Interaction with polymerase core subunit RpoC motif. The segment at 216–292 (ETINKLVREQ…DEVIENPVDY (77 aa)) is sigma-70 factor domain-3. Residues 305–358 (VLDTLTDREENVLRLRFGLDDGKMRTLEDVGKVFDVTRERIRQIEAKALRKLRH) form a sigma-70 factor domain-4 region. Residues 331–350 (LEDVGKVFDVTRERIRQIEA) constitute a DNA-binding region (H-T-H motif).

Belongs to the sigma-70 factor family. RpoD/SigA subfamily. As to quaternary structure, interacts transiently with the RNA polymerase catalytic core.

It is found in the cytoplasm. Its function is as follows. Sigma factors are initiation factors that promote the attachment of RNA polymerase to specific initiation sites and are then released. This sigma factor is the primary sigma factor during exponential growth. This Streptococcus mutans serotype c (strain ATCC 700610 / UA159) protein is RNA polymerase sigma factor SigA.